A 417-amino-acid chain; its full sequence is V-set and immunoglobulin domain-containing protein 8 (417 aa).

The N-terminal stretch at 1 to 21 is a signal peptide; it reads MGVRGALHLLLVCLSPALLSA. 2 Ig-like V-type domains span residues 22 to 140 and 145 to 256; these read VRIN…VIVT and PAVP…VKVS. Topologically, residues 22-262 are extracellular; that stretch reads VRINGDGQEV…VKVSDSQRVG (241 aa). 2 cysteine pairs are disulfide-bonded: Cys44/Cys125 and Cys166/Cys238. The helical transmembrane segment at 263-283 threads the bilayer; that stretch reads MIVGAVLGSLLMLACLALGIW. The Cytoplasmic segment spans residues 284-417; that stretch reads GLICCCCGGG…QRSCKDGLLV (134 aa).

The protein localises to the membrane. This is V-set and immunoglobulin domain-containing protein 8 (Vsig8) from Mus musculus (Mouse).